A 450-amino-acid chain; its full sequence is Protein phosphatase 1F (450 aa).

The PPM-type phosphatase domain occupies 152–409 (LVSIHAIRNT…DNITVMVVFL (258 aa)). The Mn(2+) site is built by D194, G195, D356, and D400. The disordered stretch occupies residues 420–450 (GQGAGGAQADVGSQDLSTGLSELEINTSQRS). Over residues 433–450 (QDLSTGLSELEINTSQRS) the composition is skewed to polar residues. A Phosphoserine modification is found at S450.

This sequence belongs to the PP2C family. As to quaternary structure, associates with FEM1B. Requires Mg(2+) as cofactor. Mn(2+) is required as a cofactor.

It carries out the reaction O-phospho-L-seryl-[protein] + H2O = L-seryl-[protein] + phosphate. The catalysed reaction is O-phospho-L-threonyl-[protein] + H2O = L-threonyl-[protein] + phosphate. Its function is as follows. Dephosphorylates and concomitantly deactivates CaM-kinase II activated upon autophosphorylation, and CaM-kinases IV and I activated upon phosphorylation by CaM-kinase kinase. Promotes apoptosis. The polypeptide is Protein phosphatase 1F (Ppm1f) (Rattus norvegicus (Rat)).